The chain runs to 323 residues: Syntaxin-42 (323 aa).

Residues 1-302 lie on the Cytoplasmic side of the membrane; that stretch reads MATRNRTTVY…QREGAMVKCA (302 aa). The 63-residue stretch at 227-289 folds into the t-SNARE coiled-coil homology domain; that stretch reads QHVSAERERE…EEGYKQLQKA (63 aa). A helical; Anchor for type IV membrane protein membrane pass occupies residues 303 to 323; sequence TILLVLCLIMIVLLILKNILF.

This sequence belongs to the syntaxin family. In terms of assembly, interacts with VTI12 and SYP61 to form a t-SNARE complex and with VPS45. As to expression, expressed at low levels in roots, stems, flowers and leaves.

It is found in the golgi apparatus. It localises to the trans-Golgi network membrane. Contributes to the regulation of secretory and vacuolar transport pathways in the post-Golgi network, and to the maintenance of the Golgi apparatus and trans-Golgi network (TGN) morphologies. Vesicle trafficking protein that functions in the secretory pathway and mediates liposome fusion. Required for extracellular resistance responses to a fungal pathogen. Also involved in the protection of chloroplasts from salicylic acid-dependent biotic stress. The sequence is that of Syntaxin-42 from Arabidopsis thaliana (Mouse-ear cress).